The following is a 332-amino-acid chain: Iron-utilization periplasmic protein (332 aa).

The N-terminal stretch at 1–23 (MQFKHFKLATLAAALAFSANSFA) is a signal peptide. Residues H32, E80, Y218, and Y219 each contribute to the Fe cation site.

This sequence belongs to the bacterial solute-binding protein 1 family. The complex is composed of two ATP-binding proteins (FbpC), two transmembrane proteins (FbpB) and a solute-binding protein (FbpA).

It is found in the periplasm. In terms of biological role, part of the ABC transporter complex FbpABC (TC 3.A.1.10.1) involved in Fe(3+) ions import. This protein specifically binds Fe(3+) and is involved in its transmembrane transport. This chain is Iron-utilization periplasmic protein (fbpA), found in Haemophilus influenzae (strain ATCC 51907 / DSM 11121 / KW20 / Rd).